The sequence spans 966 residues: Catenin alpha-2 (966 aa).

The span at 924–940 (PEKKPLVKREKPEEYQT) shows a compositional bias: basic and acidic residues. The interval 924 to 952 (PEKKPLVKREKPEEYQTRVRRGSQKKHIS) is disordered. The segment covering 941–951 (RVRRGSQKKHI) has biased composition (basic residues).

This sequence belongs to the vinculin/alpha-catenin family.

It localises to the cell membrane. It is found in the cytoplasm. The protein resides in the cytoskeleton. The protein localises to the cell junction. Its subcellular location is the adherens junction. It localises to the cell projection. It is found in the axon. The protein resides in the nucleus. Functionally, may function as a linker between cadherin adhesion receptors and the cytoskeleton to regulate cell-cell adhesion and differentiation in the nervous system. The polypeptide is Catenin alpha-2 (ctnna2) (Xenopus tropicalis (Western clawed frog)).